A 202-amino-acid chain; its full sequence is ATP-dependent Clp protease proteolytic subunit (202 aa).

Serine 107 acts as the Nucleophile in catalysis. Histidine 132 is an active-site residue.

The protein belongs to the peptidase S14 family. In terms of assembly, fourteen ClpP subunits assemble into 2 heptameric rings which stack back to back to give a disk-like structure with a central cavity, resembling the structure of eukaryotic proteasomes.

It is found in the cytoplasm. It carries out the reaction Hydrolysis of proteins to small peptides in the presence of ATP and magnesium. alpha-casein is the usual test substrate. In the absence of ATP, only oligopeptides shorter than five residues are hydrolyzed (such as succinyl-Leu-Tyr-|-NHMec, and Leu-Tyr-Leu-|-Tyr-Trp, in which cleavage of the -Tyr-|-Leu- and -Tyr-|-Trp bonds also occurs).. Functionally, cleaves peptides in various proteins in a process that requires ATP hydrolysis. Has a chymotrypsin-like activity. Plays a major role in the degradation of misfolded proteins. This is ATP-dependent Clp protease proteolytic subunit from Shewanella amazonensis (strain ATCC BAA-1098 / SB2B).